Consider the following 668-residue polypeptide: DNA-directed RNA polymerase subunit beta' (668 aa).

Cys71, Cys73, Cys91, and Cys94 together coordinate Zn(2+). Residues Asp505, Asp507, and Asp509 each contribute to the Mg(2+) site.

It belongs to the RNA polymerase beta' chain family. RpoC1 subfamily. As to quaternary structure, in plastids the minimal PEP RNA polymerase catalytic core is composed of four subunits: alpha, beta, beta', and beta''. When a (nuclear-encoded) sigma factor is associated with the core the holoenzyme is formed, which can initiate transcription. Mg(2+) is required as a cofactor. It depends on Zn(2+) as a cofactor.

Its subcellular location is the plastid. The protein resides in the chloroplast. The catalysed reaction is RNA(n) + a ribonucleoside 5'-triphosphate = RNA(n+1) + diphosphate. In terms of biological role, DNA-dependent RNA polymerase catalyzes the transcription of DNA into RNA using the four ribonucleoside triphosphates as substrates. The sequence is that of DNA-directed RNA polymerase subunit beta' from Mesostigma viride (Green alga).